Here is a 227-residue protein sequence, read N- to C-terminus: 2-C-methyl-D-erythritol 4-phosphate cytidylyltransferase (227 aa).

The protein belongs to the IspD/TarI cytidylyltransferase family. IspD subfamily.

It catalyses the reaction 2-C-methyl-D-erythritol 4-phosphate + CTP + H(+) = 4-CDP-2-C-methyl-D-erythritol + diphosphate. Its pathway is isoprenoid biosynthesis; isopentenyl diphosphate biosynthesis via DXP pathway; isopentenyl diphosphate from 1-deoxy-D-xylulose 5-phosphate: step 2/6. Functionally, catalyzes the formation of 4-diphosphocytidyl-2-C-methyl-D-erythritol from CTP and 2-C-methyl-D-erythritol 4-phosphate (MEP). The polypeptide is 2-C-methyl-D-erythritol 4-phosphate cytidylyltransferase (Dehalococcoides mccartyi (strain ATCC BAA-2266 / KCTC 15142 / 195) (Dehalococcoides ethenogenes (strain 195))).